We begin with the raw amino-acid sequence, 99 residues long: Small ribosomal subunit protein bS18 (99 aa).

Residues Met-1–Pro-25 are compositionally biased toward basic and acidic residues. The tract at residues Met-1 to Asn-28 is disordered.

The protein belongs to the bacterial ribosomal protein bS18 family. As to quaternary structure, part of the 30S ribosomal subunit. Forms a tight heterodimer with protein bS6.

Functionally, binds as a heterodimer with protein bS6 to the central domain of the 16S rRNA, where it helps stabilize the platform of the 30S subunit. This Treponema pallidum (strain Nichols) protein is Small ribosomal subunit protein bS18.